The following is a 215-amino-acid chain: Adenylate kinase (215 aa).

An ATP-binding site is contributed by 10 to 15 (GAGKGT). An NMP region spans residues 30-59 (STGDMLRAAVKAGTELGLIAKSVMDSGGLV). AMP contacts are provided by residues threonine 31, arginine 36, 57 to 59 (GLV), 85 to 88 (GFPR), and glutamine 92. The interval 122 to 159 (GRRVHEASGRVYHTVYNPPKVEGKDDVTGDDLVQRKDD) is LID. Residues arginine 123 and 132–133 (VY) contribute to the ATP site. The AMP site is built by arginine 156 and arginine 167. Glycine 201 is a binding site for ATP.

The protein belongs to the adenylate kinase family. As to quaternary structure, monomer.

Its subcellular location is the cytoplasm. It catalyses the reaction AMP + ATP = 2 ADP. Its pathway is purine metabolism; AMP biosynthesis via salvage pathway; AMP from ADP: step 1/1. Its function is as follows. Catalyzes the reversible transfer of the terminal phosphate group between ATP and AMP. Plays an important role in cellular energy homeostasis and in adenine nucleotide metabolism. This Pseudomonas fluorescens (strain SBW25) protein is Adenylate kinase.